Consider the following 256-residue polypeptide: Triosephosphate isomerase (256 aa).

Substrate is bound at residue 9–11; sequence NWK. Histidine 94 functions as the Electrophile in the catalytic mechanism. The active-site Proton acceptor is the glutamate 166. Substrate contacts are provided by residues glycine 172, serine 211, and 232 to 233; that span reads GG.

This sequence belongs to the triosephosphate isomerase family. Homodimer.

It is found in the cytoplasm. It catalyses the reaction D-glyceraldehyde 3-phosphate = dihydroxyacetone phosphate. Its pathway is carbohydrate biosynthesis; gluconeogenesis. The protein operates within carbohydrate degradation; glycolysis; D-glyceraldehyde 3-phosphate from glycerone phosphate: step 1/1. Its function is as follows. Involved in the gluconeogenesis. Catalyzes stereospecifically the conversion of dihydroxyacetone phosphate (DHAP) to D-glyceraldehyde-3-phosphate (G3P). This Natranaerobius thermophilus (strain ATCC BAA-1301 / DSM 18059 / JW/NM-WN-LF) protein is Triosephosphate isomerase.